The primary structure comprises 81 residues: ATP synthase subunit c, chloroplastic (81 aa).

2 helical membrane-spanning segments follow: residues 3-23 and 57-77; these read PLIA…ASIG and LAFM…LLFA.

Belongs to the ATPase C chain family. In terms of assembly, F-type ATPases have 2 components, F(1) - the catalytic core - and F(0) - the membrane proton channel. F(1) has five subunits: alpha(3), beta(3), gamma(1), delta(1), epsilon(1). F(0) has four main subunits: a(1), b(1), b'(1) and c(10-14). The alpha and beta chains form an alternating ring which encloses part of the gamma chain. F(1) is attached to F(0) by a central stalk formed by the gamma and epsilon chains, while a peripheral stalk is formed by the delta, b and b' chains.

The protein localises to the plastid. Its subcellular location is the chloroplast thylakoid membrane. Functionally, f(1)F(0) ATP synthase produces ATP from ADP in the presence of a proton or sodium gradient. F-type ATPases consist of two structural domains, F(1) containing the extramembraneous catalytic core and F(0) containing the membrane proton channel, linked together by a central stalk and a peripheral stalk. During catalysis, ATP synthesis in the catalytic domain of F(1) is coupled via a rotary mechanism of the central stalk subunits to proton translocation. In terms of biological role, key component of the F(0) channel; it plays a direct role in translocation across the membrane. A homomeric c-ring of between 10-14 subunits forms the central stalk rotor element with the F(1) delta and epsilon subunits. This is ATP synthase subunit c, chloroplastic from Agrostis stolonifera (Creeping bentgrass).